The sequence spans 249 residues: MWVGVISLFPEMFTSITNFGVTGQAVKKGLLSIDTWNPRDFTEDKHRTVDDRPYGGGPGMLMMVQPLRDAIHTAKKSAKGKAKVIYLSPQGRKLDQAGVEELAQNESLILICGRYEGVDERIIQQEVDEEWSIGDFVLTGGELPAMTLVDAVVRFVPGVLGDFASAEEDSFANGLLDCPHYTRPDVLDGHAVPKVLMSGNHKDISRWRLKQSLGRTWLRRPELLGNLALTDDQEFLLAEFIREYKASII.

S-adenosyl-L-methionine is bound by residues Gly-113 and 133–138 (IGDFVL).

This sequence belongs to the RNA methyltransferase TrmD family. In terms of assembly, homodimer.

Its subcellular location is the cytoplasm. The enzyme catalyses guanosine(37) in tRNA + S-adenosyl-L-methionine = N(1)-methylguanosine(37) in tRNA + S-adenosyl-L-homocysteine + H(+). Specifically methylates guanosine-37 in various tRNAs. This is tRNA (guanine-N(1)-)-methyltransferase from Photobacterium profundum (strain SS9).